The sequence spans 430 residues: GTPase Obg (430 aa).

Residues 1 to 158 (MFVDQVKISL…LDVSLELKLL (158 aa)) enclose the Obg domain. The tract at residues 118 to 145 (KGGRGGRGNSRFATPRNPAPDFSEKGEP) is disordered. The OBG-type G domain occupies 159 to 329 (ADVGLVGFPS…LLYAIADKLE (171 aa)). GTP is bound by residues 165–172 (GFPSVGKS), 190–194 (FTTIK), 212–215 (DLPG), 282–285 (NKMD), and 310–312 (STI). Residues S172 and T192 each coordinate Mg(2+). The 79-residue stretch at 352–430 (KHTPSQDKFT…ILGGEFEFVE (79 aa)) folds into the OCT domain.

The protein belongs to the TRAFAC class OBG-HflX-like GTPase superfamily. OBG GTPase family. In terms of assembly, monomer. The cofactor is Mg(2+).

It is found in the cytoplasm. An essential GTPase which binds GTP, GDP and possibly (p)ppGpp with moderate affinity, with high nucleotide exchange rates and a fairly low GTP hydrolysis rate. Plays a role in control of the cell cycle, stress response, ribosome biogenesis and in those bacteria that undergo differentiation, in morphogenesis control. This is GTPase Obg from Staphylococcus aureus (strain COL).